The following is a 256-amino-acid chain: MLILVSPAKTLDFEQPPLTQVYSQPDFLTHSQELIQVCRQLAPSDIATLMKVSDKIAGLNAARFGEWQPDFSLDNAKQAIFAFRGDVYTGFDADSLSEDEIAQTQSQLRILSGLYGLLRPLDLIMPYRLEMGTALSNPKGKNLYEFWGDTLTQAVNEALAESGSDIIVNLASNEYFKAIKPKKLQGQLISPVFKDCKNGQYKVISFFAKRARGMMARYIITNKVNTLAELKAFNLAGYYYSEEQSSPTNPTFLRAE.

Belongs to the UPF0246 family.

The polypeptide is UPF0246 protein Sbal_1048 (Shewanella baltica (strain OS155 / ATCC BAA-1091)).